The primary structure comprises 351 residues: UDP-N-acetylenolpyruvoylglucosamine reductase (351 aa).

In terms of domain architecture, FAD-binding PCMH-type spans 25–196 (HIQAQARWLL…AAVEFRLPLL (172 aa)). The active site involves Arg-173. Ser-246 serves as the catalytic Proton donor. Glu-343 is a catalytic residue.

The protein belongs to the MurB family. It depends on FAD as a cofactor.

It is found in the cytoplasm. The enzyme catalyses UDP-N-acetyl-alpha-D-muramate + NADP(+) = UDP-N-acetyl-3-O-(1-carboxyvinyl)-alpha-D-glucosamine + NADPH + H(+). It participates in cell wall biogenesis; peptidoglycan biosynthesis. In terms of biological role, cell wall formation. The protein is UDP-N-acetylenolpyruvoylglucosamine reductase of Xylella fastidiosa (strain 9a5c).